Here is a 362-residue protein sequence, read N- to C-terminus: Diphosphomevalonate decarboxylase (362 aa).

(R)-5-diphosphomevalonate-binding positions include 17–20 (YWGK), Arg72, 150–155 (SGSACR), and Thr206.

The protein belongs to the diphosphomevalonate decarboxylase family. Homodimer.

The enzyme catalyses (R)-5-diphosphomevalonate + ATP = isopentenyl diphosphate + ADP + phosphate + CO2. The protein operates within isoprenoid biosynthesis; isopentenyl diphosphate biosynthesis via mevalonate pathway; isopentenyl diphosphate from (R)-mevalonate: step 3/3. In terms of biological role, diphosphomevalonate decarboxylase; part of the second module of ergosterol biosynthesis pathway that includes the middle steps of the pathway. MVD1 converts diphosphomevalonate into isopentenyl diphosphate. The second module is carried out in the vacuole and involves the formation of farnesyl diphosphate, which is also an important intermediate in the biosynthesis of ubiquinone, dolichol, heme and prenylated proteins. Activity by the mevalonate kinase ERG12 first converts mevalonate into 5-phosphomevalonate. 5-phosphomevalonate is then further converted to 5-diphosphomevalonate by the phosphomevalonate kinase ERG8. The diphosphomevalonate decarboxylase MVD then produces isopentenyl diphosphate. The isopentenyl-diphosphate delta-isomerase IDI1 then catalyzes the 1,3-allylic rearrangement of the homoallylic substrate isopentenyl (IPP) to its highly electrophilic allylic isomer, dimethylallyl diphosphate (DMAPP). Finally the farnesyl diphosphate synthase ERG20 catalyzes the sequential condensation of isopentenyl pyrophosphate with dimethylallyl pyrophosphate, and then with the resultant geranylpyrophosphate to the ultimate product farnesyl pyrophosphate. The sequence is that of Diphosphomevalonate decarboxylase from Candida albicans (strain SC5314 / ATCC MYA-2876) (Yeast).